We begin with the raw amino-acid sequence, 530 residues long: ATP synthase subunit alpha 3 (530 aa).

Gly-174–Thr-181 contacts ATP. Residues Thr-507 to Ala-522 show a composition bias toward low complexity. The interval Thr-507–Pro-530 is disordered.

Belongs to the ATPase alpha/beta chains family. F-type ATPases have 2 components, CF(1) - the catalytic core - and CF(0) - the membrane proton channel. CF(1) has five subunits: alpha(3), beta(3), gamma(1), delta(1), epsilon(1). CF(0) has three main subunits: a(1), b(2) and c(9-12). The alpha and beta chains form an alternating ring which encloses part of the gamma chain. CF(1) is attached to CF(0) by a central stalk formed by the gamma and epsilon chains, while a peripheral stalk is formed by the delta and b chains.

Its subcellular location is the cell inner membrane. It carries out the reaction ATP + H2O + 4 H(+)(in) = ADP + phosphate + 5 H(+)(out). Its function is as follows. Produces ATP from ADP in the presence of a proton gradient across the membrane. The alpha chain is a regulatory subunit. This Paraburkholderia xenovorans (strain LB400) protein is ATP synthase subunit alpha 3.